We begin with the raw amino-acid sequence, 896 residues long: Translation initiation factor IF-2 (896 aa).

Residues 1–260 (MDIENTNKPD…AQTNKKAHKA (260 aa)) form a disordered region. The span at 19 to 34 (KAADSKPESGKTDSKR) shows a compositional bias: basic and acidic residues. Over residues 56–66 (EESSGGKASGK) the composition is skewed to low complexity. Residues 85–136 (SVKEKKPDERLEETKKTAPRFEDKKSDAPSAQNEKRSFDSAKKEEKQTERKK) show a composition bias toward basic and acidic residues. Positions 168–177 (RGQGNRPQRP) are enriched in low complexity. Residues 375–544 (PRPPVVTIMG…LLQAEVLELK (170 aa)) enclose the tr-type G domain. Residues 384–391 (GHVDHGKT) form a G1 region. 384–391 (GHVDHGKT) contributes to the GTP binding site. The segment at 409 to 413 (GITQH) is G2. Positions 430–433 (DTPG) are G3. GTP-binding positions include 430–434 (DTPGH) and 484–487 (NKVD). Residues 484–487 (NKVD) are G4. Positions 520–522 (SAL) are G5. Residues 877–896 (SDSEKYKAPEIKEEGTETDE) are disordered.

It belongs to the TRAFAC class translation factor GTPase superfamily. Classic translation factor GTPase family. IF-2 subfamily.

It is found in the cytoplasm. Functionally, one of the essential components for the initiation of protein synthesis. Protects formylmethionyl-tRNA from spontaneous hydrolysis and promotes its binding to the 30S ribosomal subunits. Also involved in the hydrolysis of GTP during the formation of the 70S ribosomal complex. This is Translation initiation factor IF-2 from Treponema denticola (strain ATCC 35405 / DSM 14222 / CIP 103919 / JCM 8153 / KCTC 15104).